The sequence spans 512 residues: MARAVHRSGLVALGIATALMASCAFAAKEVVVAVGSNFTTLDPYDANDTLSQAVAKSFYQGLFGLDKEMKLKNVLAESYTVSDDGLTYTVKLREGIKFQDGTDFNAAAVKANLDRASDPANHLKRYNLYKNIAKTEAIDPTTVKITLKQPFSAFINILAHPATAMISPAALEKYGKEIGFHPVGTGPYELDTWNQTDFVKVKKFAGYWQPGLPKLDSITWRPVADNNTRAAMLQTGEAQFAFPIPYEQAALLEKNKNIELMASPSIMQRYISMNVTQKPFDNPKVREALNYAINRPALVKVAFAGYATPATGVVPPSIAYAQSYKPWPYDPVKARELLKEAGYPNGFSTTLWSSHNHSTAQKVLQFTQQQLAQVGIKAQVTAMDAGQRAAEVEGKGQKESGVRMFYTGWSASTGEADWALSPLFASQNWPPTLFNTAFYSNKQVDDFLAQALKTNDPAEKTRLYKAAQDIIWQESPWIPLVVEKLVSAHSKNLTGFWIMPDTGFSFEDADLQ.

The N-terminal stretch at 1–26 is a signal peptide; the sequence is MARAVHRSGLVALGIATALMASCAFA.

This sequence belongs to the bacterial solute-binding protein 5 family. In terms of assembly, the complex is composed of two ATP-binding proteins (GsiA), two transmembrane proteins (GsiC and GsiD) and a solute-binding protein (GsiB).

The protein resides in the periplasm. Part of the ABC transporter complex GsiABCD involved in glutathione import. Binds glutathione. The chain is Glutathione-binding protein GsiB from Escherichia coli O1:K1 / APEC.